The sequence spans 513 residues: ATP synthase subunit alpha (513 aa).

169–176 (GDRKTGKS) provides a ligand contact to ATP.

Belongs to the ATPase alpha/beta chains family. In terms of assembly, F-type ATPases have 2 components, CF(1) - the catalytic core - and CF(0) - the membrane proton channel. CF(1) has five subunits: alpha(3), beta(3), gamma(1), delta(1), epsilon(1). CF(0) has three main subunits: a(1), b(2) and c(9-12). The alpha and beta chains form an alternating ring which encloses part of the gamma chain. CF(1) is attached to CF(0) by a central stalk formed by the gamma and epsilon chains, while a peripheral stalk is formed by the delta and b chains.

The protein localises to the cell membrane. The catalysed reaction is ATP + H2O + 4 H(+)(in) = ADP + phosphate + 5 H(+)(out). In terms of biological role, produces ATP from ADP in the presence of a proton gradient across the membrane. The alpha chain is a regulatory subunit. The protein is ATP synthase subunit alpha of Levilactobacillus brevis (strain ATCC 367 / BCRC 12310 / CIP 105137 / JCM 1170 / LMG 11437 / NCIMB 947 / NCTC 947) (Lactobacillus brevis).